The primary structure comprises 208 residues: Protein Nef (208 aa).

Residues 1–33 (MGGKWSKRMSGWSAVRERMKRAEPAEPAADGVG) form a disordered region. Gly2 is lipidated: N-myristoyl glycine; by host. A Phosphoserine; by host modification is found at Ser6. Positions 15–24 (VRERMKRAEP) are enriched in basic and acidic residues. The interval 64–67 (EDED) is acidic; interacts with host PACS1 and PACS2; stabilizes the interaction of NEF/MHC-I with host AP1M1; necessary for MHC-I internalization. Positions 71 to 80 (PVRPQVPLRP) are SH3-binding; interaction with Src family tyrosine kinases. The PxxP; stabilizes the interaction of NEF/MHC-I with host AP1M1; necessary for MHC-I internalization motif lies at 74–77 (PQVP). Positions 110–126 (DILDLWIHHTQGYFPDW) are mediates dimerization, Nef-PTE1 interaction. Residues 150 to 182 (VDPDYVEEANAGENNSLLHPMSQHGMDDPEKEV) form a binding to ATP6V1H region. Positions 166 to 167 (LL) match the Dileucine internalization motif; necessary for CD4 internalization motif. The Diacidic; necessary for CD4 internalization motif lies at 176–177 (DD).

Belongs to the lentivirus primate group Nef protein family. As to quaternary structure, monomer; cytosolic form. Homodimer; membrane bound form. Interacts with Nef associated p21-activated kinase (PAK2); this interaction activates PAK2. Associates with the Nef-MHC-I-AP1 complex; this complex is required for MHC-I internalization. Interacts (via C-terminus) with host PI3-kinase. Interacts with host PACS1; this interaction seems to be weak. Interacts with host PACS2. Interacts with host LCK and MAPK3; these interactions inhibit the kinase activity of the latter. Interacts with host ATP6V1H; this interaction may play a role in CD4 endocytosis. Associates with the CD4-Nef-AP2 complex; this complex is required for CD4 internalization. Interacts with host AP2 subunit alpha and AP2 subunit sigma2. Interacts with TCR-zeta chain; this interaction up-regulates the Fas ligand (FasL) surface expression. Interacts with host HCK, LYN, and SRC; these interactions activate the Src family kinases. Interacts with MAP3K5; this interaction inhibits the Fas and TNFR-mediated death signals. Interacts with beta-COP and PTE1. Interacts with human RACK1; this increases Nef phosphorylation by PKC. Interacts with TP53; this interaction decreases the half-life of TP53, protecting the infected cell against p53-mediated apoptosis. The virion-associated Nef proteins are cleaved by the viral protease to release the soluble C-terminal core protein. Nef is probably cleaved concomitantly with viral structural proteins on maturation of virus particles. In terms of processing, myristoylated. Post-translationally, phosphorylated on serine residues, probably by host PKCdelta and theta.

The protein resides in the host cell membrane. It is found in the virion. The protein localises to the secreted. Its subcellular location is the host Golgi apparatus membrane. Its function is as follows. Factor of infectivity and pathogenicity, required for optimal virus replication. Alters numerous pathways of T-lymphocyte function and down-regulates immunity surface molecules in order to evade host defense and increase viral infectivity. Alters the functionality of other immunity cells, like dendritic cells, monocytes/macrophages and NK cells. Functionally, in infected CD4(+) T-lymphocytes, down-regulates the surface MHC-I, mature MHC-II, CD4, CD28, CCR5 and CXCR4 molecules. Mediates internalization and degradation of host CD4 through the interaction of with the cytoplasmic tail of CD4, the recruitment of AP-2 (clathrin adapter protein complex 2), internalization through clathrin coated pits, and subsequent transport to endosomes and lysosomes for degradation. Diverts host MHC-I molecules to the trans-Golgi network-associated endosomal compartments by an endocytic pathway to finally target them for degradation. MHC-I down-regulation may involve AP-1 (clathrin adapter protein complex 1) or possibly Src family kinase-ZAP70/Syk-PI3K cascade recruited by PACS2. In consequence infected cells are masked for immune recognition by cytotoxic T-lymphocytes. Decreasing the number of immune receptors also prevents reinfection by more HIV particles (superinfection). Down-regulates host SERINC3 and SERINC5 thereby excluding these proteins from the viral particles. Virion infectivity is drastically higher when SERINC3 or SERINC5 are excluded from the viral envelope, because these host antiviral proteins impair the membrane fusion event necessary for subsequent virion penetration. Bypasses host T-cell signaling by inducing a transcriptional program nearly identical to that of anti-CD3 cell activation. Interaction with TCR-zeta chain up-regulates the Fas ligand (FasL). Increasing surface FasL molecules and decreasing surface MHC-I molecules on infected CD4(+) cells send attacking cytotoxic CD8+ T-lymphocytes into apoptosis. In terms of biological role, plays a role in optimizing the host cell environment for viral replication without causing cell death by apoptosis. Protects the infected cells from apoptosis in order to keep them alive until the next virus generation is ready to strike. Inhibits the Fas and TNFR-mediated death signals by blocking MAP3K5/ASK1. Decreases the half-life of TP53, protecting the infected cell against p53-mediated apoptosis. Inhibits the apoptotic signals regulated by the Bcl-2 family proteins through the formation of a Nef/PI3-kinase/PAK2 complex that leads to activation of PAK2 and induces phosphorylation of host BAD. Its function is as follows. Extracellular Nef protein targets CD4(+) T-lymphocytes for apoptosis by interacting with CXCR4 surface receptors. This Human immunodeficiency virus type 1 group M subtype B (isolate SF162) (HIV-1) protein is Protein Nef.